Reading from the N-terminus, the 296-residue chain is Enoyl-CoA hydratase domain-containing protein 2, mitochondrial (296 aa).

A mitochondrion-targeting transit peptide spans 1-17 (MLRVLPRALRLPCSWRF). The residue at position 101 (Lys-101) is an N6-acetyllysine; alternate. Lys-101 bears the N6-succinyllysine; alternate mark.

This sequence belongs to the enoyl-CoA hydratase/isomerase family.

The protein resides in the mitochondrion. The protein is Enoyl-CoA hydratase domain-containing protein 2, mitochondrial (Echdc2) of Mus musculus (Mouse).